The chain runs to 269 residues: Phosphate import ATP-binding protein PstB (269 aa).

Residues 22 to 264 (AEVRDLNFYY…PVQQKTADYV (243 aa)) form the ABC transporter domain. Position 54–61 (54–61 (GPSGCGKT)) interacts with ATP.

Belongs to the ABC transporter superfamily. Phosphate importer (TC 3.A.1.7) family. As to quaternary structure, the complex is composed of two ATP-binding proteins (PstB), two transmembrane proteins (PstC and PstA) and a solute-binding protein (PstS).

The protein localises to the cell inner membrane. It catalyses the reaction phosphate(out) + ATP + H2O = ADP + 2 phosphate(in) + H(+). Functionally, part of the ABC transporter complex PstSACB involved in phosphate import. Responsible for energy coupling to the transport system. The sequence is that of Phosphate import ATP-binding protein PstB from Thermosynechococcus vestitus (strain NIES-2133 / IAM M-273 / BP-1).